The sequence spans 148 residues: Snaclec 3 (148 aa).

A signal peptide spans 1 to 23 (MGRFISVSFGLLVVFLSLSGTEA). Intrachain disulfides connect Cys-27-Cys-38, Cys-55-Cys-144, and Cys-121-Cys-136. The region spanning 34 to 145 (YDQNCYKVFT…CSSTHNFVCK (112 aa)) is the C-type lectin domain.

The protein belongs to the snaclec family. Heterodimer; disulfide-linked.

It localises to the secreted. Its function is as follows. Interferes with one step of hemostasis (modulation of platelet aggregation, or coagulation cascade, for example). This Daboia siamensis (Eastern Russel's viper) protein is Snaclec 3.